The sequence spans 214 residues: Late embryogenesis abundant protein At1g64065 (214 aa).

The chain crosses the membrane as a helical span at residues 41–61; it reads VYSLTIIVIIFALCLILSSIF.

This sequence belongs to the LEA type 2 family.

It localises to the membrane. The polypeptide is Late embryogenesis abundant protein At1g64065 (Arabidopsis thaliana (Mouse-ear cress)).